Consider the following 248-residue polypeptide: Ribonuclease PH (248 aa).

Phosphate-binding positions include arginine 86 and 124 to 126; that span reads GTR.

It belongs to the RNase PH family. In terms of assembly, homohexameric ring arranged as a trimer of dimers.

It carries out the reaction tRNA(n+1) + phosphate = tRNA(n) + a ribonucleoside 5'-diphosphate. In terms of biological role, phosphorolytic 3'-5' exoribonuclease that plays an important role in tRNA 3'-end maturation. Removes nucleotide residues following the 3'-CCA terminus of tRNAs; can also add nucleotides to the ends of RNA molecules by using nucleoside diphosphates as substrates, but this may not be physiologically important. Probably plays a role in initiation of 16S rRNA degradation (leading to ribosome degradation) during starvation. This Clostridium perfringens (strain SM101 / Type A) protein is Ribonuclease PH.